We begin with the raw amino-acid sequence, 234 residues long: Ponticulin-like protein J (234 aa).

The N-terminal stretch at 1–20 (MRLLNNLILMVVLFVAVSNA) is a signal peptide. N-linked (GlcNAc...) asparagine glycosylation is found at Asn19, Asn143, Asn166, and Asn206. The tract at residues 115 to 213 (TIKCGTLPPD…SDNETAEGNN (99 aa)) is disordered. Over residues 154–195 (KSTPKSPSTPKTNNSNEDSDLTTSSSDSSSSTKSSPKSKSST) the composition is skewed to low complexity. The GPI-like-anchor amidated asparagine moiety is linked to residue Asn212. The N-linked (GlcNAc...) asparagine glycan is linked to Asn213. A propeptide spans 213 to 234 (NASSNIATFSLVIISLLVASLF) (removed in mature form).

The protein belongs to the ponticulin family. Post-translationally, the GPI-like-anchor contains a phosphoceramide group, rather than a phosphatidyl group.

Its subcellular location is the cell membrane. Its function is as follows. Binds F-actin and nucleates actin assembly. The chain is Ponticulin-like protein J (ponJ) from Dictyostelium discoideum (Social amoeba).